The primary structure comprises 346 residues: Holliday junction branch migration complex subunit RuvB (346 aa).

The large ATPase domain (RuvB-L) stretch occupies residues 4–185 (SDRIITASPF…FGIVSRLEFY (182 aa)). ATP is bound by residues L24, R25, G66, K69, T70, T71, 132–134 (EDY), R175, Y185, and R222. Position 70 (T70) interacts with Mg(2+). The tract at residues 186 to 256 (TSDELSKIVT…VADAALQMLD (71 aa)) is small ATPAse domain (RuvB-S). A head domain (RuvB-H) region spans residues 259 to 346 (AAGLDVLDRK…AATPGLFNPD (88 aa)). R295, R314, and R319 together coordinate DNA.

Belongs to the RuvB family. Homohexamer. Forms an RuvA(8)-RuvB(12)-Holliday junction (HJ) complex. HJ DNA is sandwiched between 2 RuvA tetramers; dsDNA enters through RuvA and exits via RuvB. An RuvB hexamer assembles on each DNA strand where it exits the tetramer. Each RuvB hexamer is contacted by two RuvA subunits (via domain III) on 2 adjacent RuvB subunits; this complex drives branch migration. In the full resolvosome a probable DNA-RuvA(4)-RuvB(12)-RuvC(2) complex forms which resolves the HJ.

It is found in the cytoplasm. The enzyme catalyses ATP + H2O = ADP + phosphate + H(+). Functionally, the RuvA-RuvB-RuvC complex processes Holliday junction (HJ) DNA during genetic recombination and DNA repair, while the RuvA-RuvB complex plays an important role in the rescue of blocked DNA replication forks via replication fork reversal (RFR). RuvA specifically binds to HJ cruciform DNA, conferring on it an open structure. The RuvB hexamer acts as an ATP-dependent pump, pulling dsDNA into and through the RuvAB complex. RuvB forms 2 homohexamers on either side of HJ DNA bound by 1 or 2 RuvA tetramers; 4 subunits per hexamer contact DNA at a time. Coordinated motions by a converter formed by DNA-disengaged RuvB subunits stimulates ATP hydrolysis and nucleotide exchange. Immobilization of the converter enables RuvB to convert the ATP-contained energy into a lever motion, pulling 2 nucleotides of DNA out of the RuvA tetramer per ATP hydrolyzed, thus driving DNA branch migration. The RuvB motors rotate together with the DNA substrate, which together with the progressing nucleotide cycle form the mechanistic basis for DNA recombination by continuous HJ branch migration. Branch migration allows RuvC to scan DNA until it finds its consensus sequence, where it cleaves and resolves cruciform DNA. The sequence is that of Holliday junction branch migration complex subunit RuvB from Nitrosomonas eutropha (strain DSM 101675 / C91 / Nm57).